The following is a 591-amino-acid chain: Aspartate--tRNA(Asp/Asn) ligase (591 aa).

Glu175 contributes to the L-aspartate binding site. The segment at 199–202 is aspartate; sequence QQFK. The L-aspartate site is built by Arg221 and His453. 221-223 serves as a coordination point for ATP; sequence RDE. Glu486 is an ATP binding site. Residue Arg493 participates in L-aspartate binding. 538 to 541 is an ATP binding site; it reads GIDR.

The protein belongs to the class-II aminoacyl-tRNA synthetase family. Type 1 subfamily. As to quaternary structure, homodimer.

Its subcellular location is the cytoplasm. It carries out the reaction tRNA(Asx) + L-aspartate + ATP = L-aspartyl-tRNA(Asx) + AMP + diphosphate. Functionally, aspartyl-tRNA synthetase with relaxed tRNA specificity since it is able to aspartylate not only its cognate tRNA(Asp) but also tRNA(Asn). Reaction proceeds in two steps: L-aspartate is first activated by ATP to form Asp-AMP and then transferred to the acceptor end of tRNA(Asp/Asn). The chain is Aspartate--tRNA(Asp/Asn) ligase from Cereibacter sphaeroides (strain KD131 / KCTC 12085) (Rhodobacter sphaeroides).